We begin with the raw amino-acid sequence, 289 residues long: Glycine--tRNA ligase alpha subunit (289 aa).

The protein belongs to the class-II aminoacyl-tRNA synthetase family. As to quaternary structure, tetramer of two alpha and two beta subunits.

Its subcellular location is the cytoplasm. The enzyme catalyses tRNA(Gly) + glycine + ATP = glycyl-tRNA(Gly) + AMP + diphosphate. This chain is Glycine--tRNA ligase alpha subunit, found in Prochlorococcus marinus subsp. pastoris (strain CCMP1986 / NIES-2087 / MED4).